The primary structure comprises 300 residues: tRNA dimethylallyltransferase (300 aa).

An ATP-binding site is contributed by 9–16 (GPTASGKS). Residue 11–16 (TASGKS) participates in substrate binding. Residues 34–37 (DSKQ) form an interaction with substrate tRNA region.

The protein belongs to the IPP transferase family. In terms of assembly, monomer. The cofactor is Mg(2+).

It catalyses the reaction adenosine(37) in tRNA + dimethylallyl diphosphate = N(6)-dimethylallyladenosine(37) in tRNA + diphosphate. Catalyzes the transfer of a dimethylallyl group onto the adenine at position 37 in tRNAs that read codons beginning with uridine, leading to the formation of N6-(dimethylallyl)adenosine (i(6)A). This Ehrlichia ruminantium (strain Welgevonden) protein is tRNA dimethylallyltransferase.